The following is a 155-amino-acid chain: Ribonuclease H (155 aa).

Positions 7 to 150 constitute an RNase H type-1 domain; sequence AQNAVDLYTD…ADKLACKGRD (144 aa). Residues aspartate 16, glutamate 54, aspartate 77, and aspartate 142 each contribute to the Mg(2+) site.

It belongs to the RNase H family. Monomer. Mg(2+) is required as a cofactor.

The protein localises to the cytoplasm. It catalyses the reaction Endonucleolytic cleavage to 5'-phosphomonoester.. In terms of biological role, endonuclease that specifically degrades the RNA of RNA-DNA hybrids. The polypeptide is Ribonuclease H (Saccharopolyspora erythraea (strain ATCC 11635 / DSM 40517 / JCM 4748 / NBRC 13426 / NCIMB 8594 / NRRL 2338)).